The sequence spans 843 residues: Glycogen phosphorylase, brain form (843 aa).

At A2 the chain carries N-acetylalanine. The residue at position 15 (S15) is a Phosphoserine; by PHK; in form phosphorylase A. 3 residues coordinate AMP: D43, Y197, and R310. Y197 carries the phosphotyrosine modification. Y473 carries the post-translational modification Phosphotyrosine. S524 is modified (phosphoserine). K569 lines the pyridoxal 5'-phosphate pocket. The segment at 677–678 is pyridoxal 5'-phosphate; that stretch reads TG. N6-(pyridoxal phosphate)lysine is present on K681.

It belongs to the glycogen phosphorylase family. In terms of assembly, homodimer. Dimers associate into a tetramer to form the enzymatically active phosphorylase A. Pyridoxal 5'-phosphate is required as a cofactor. In terms of processing, phosphorylation of Ser-15 converts phosphorylase B (unphosphorylated) to phosphorylase A.

It carries out the reaction [(1-&gt;4)-alpha-D-glucosyl](n) + phosphate = [(1-&gt;4)-alpha-D-glucosyl](n-1) + alpha-D-glucose 1-phosphate. With respect to regulation, activity of phosphorylase is controlled both by allosteric means (through the non-covalent binding of metabolites) and by covalent modification. Thus AMP allosterically activates, whereas ATP, ADP, and glucose-6-phosphate allosterically inhibit, phosphorylase B. Glycogen phosphorylase that regulates glycogen mobilization. Phosphorylase is an important allosteric enzyme in carbohydrate metabolism. Enzymes from different sources differ in their regulatory mechanisms and in their natural substrates. However, all known phosphorylases share catalytic and structural properties. The polypeptide is Glycogen phosphorylase, brain form (Pygb) (Mus musculus (Mouse)).